The primary structure comprises 555 residues: MKKYMGIIVDAISRRQFKGEITVENGKIIRVEEKEHDNEQYILPGLVDAHVHIESSMTVPSVFARMAVAKGTVAVVSDPHEIANVMGEEGIEFMLEDSKKSPLKVYFGVPSCVPATPFESSGAVLDINAVDRLLAKDDLHYLSEMMNFPGVILEFPDVMAKLESARKHGKVIDGHAPGLRGADLQKYIGAGISTDHECFEYEEAREKIELGMKILIREGSSARNFETLYPLIDEYPDHVMLCTDDSHPDTLIYEGHIDKLIRRGQEKGLDIYNLIRTAVFNPVEHYGLNVGLLREGDPADFIIVDNLKSFNILSTFIDGECVYENGKVLFPLEKVPAKNVFNRNKISIDDVKLVPPAGAIQEQTTEKGIKKIRVIVANDGELVTGQELIVPKIENGNLVSDPERDILKMVVLSRYSDDPVRIGFIKNIGLEKGAIASSIAHDSHNIIAVGATDEDIVETVNRLIKNKGGIAVGTAENLLDLPLEVAGLMSTLEGEEVASRYHLLNEEARKLGTSLESPFMTLAFMSLLVIPELKLGDKGLFDVTKFEFVDLFADE.

Belongs to the metallo-dependent hydrolases superfamily. Adenine deaminase family. The cofactor is Mn(2+).

The enzyme catalyses adenine + H2O + H(+) = hypoxanthine + NH4(+). This chain is Adenine deaminase, found in Methanosarcina mazei (strain ATCC BAA-159 / DSM 3647 / Goe1 / Go1 / JCM 11833 / OCM 88) (Methanosarcina frisia).